Here is a 539-residue protein sequence, read N- to C-terminus: Membrane protein insertase YidC (539 aa).

The next 5 membrane-spanning stretches (helical) occupy residues 6 to 26 (TLLV…WQVA), 341 to 361 (SVIQ…TFIV), 416 to 436 (LGGC…YWAL), 454 to 474 (LSAQ…MFLI), and 495 to 515 (PVMF…YWLV).

The protein belongs to the OXA1/ALB3/YidC family. Type 1 subfamily. Interacts with the Sec translocase complex via SecD. Specifically interacts with transmembrane segments of nascent integral membrane proteins during membrane integration.

Its subcellular location is the cell inner membrane. Required for the insertion and/or proper folding and/or complex formation of integral membrane proteins into the membrane. Involved in integration of membrane proteins that insert both dependently and independently of the Sec translocase complex, as well as at least some lipoproteins. Aids folding of multispanning membrane proteins. The polypeptide is Membrane protein insertase YidC (Vibrio vulnificus (strain CMCP6)).